The primary structure comprises 366 residues: Erythronate-4-phosphate dehydrogenase (366 aa).

Substrate-binding residues include Ser46 and Thr67. Residues Asp147 and Thr175 each coordinate NAD(+). Arg208 is an active-site residue. Asp228 is an NAD(+) binding site. Glu233 is an active-site residue. His250 acts as the Proton donor in catalysis. Gly253 contacts NAD(+). Tyr254 serves as a coordination point for substrate.

The protein belongs to the D-isomer specific 2-hydroxyacid dehydrogenase family. PdxB subfamily. As to quaternary structure, homodimer.

It is found in the cytoplasm. It catalyses the reaction 4-phospho-D-erythronate + NAD(+) = (R)-3-hydroxy-2-oxo-4-phosphooxybutanoate + NADH + H(+). Its pathway is cofactor biosynthesis; pyridoxine 5'-phosphate biosynthesis; pyridoxine 5'-phosphate from D-erythrose 4-phosphate: step 2/5. Catalyzes the oxidation of erythronate-4-phosphate to 3-hydroxy-2-oxo-4-phosphonooxybutanoate. This Coxiella burnetii (strain Dugway 5J108-111) protein is Erythronate-4-phosphate dehydrogenase.